The chain runs to 264 residues: S-adenosylmethionine decarboxylase proenzyme (264 aa).

Ser113 serves as the catalytic Schiff-base intermediate with substrate; via pyruvic acid. Ser113 bears the Pyruvic acid (Ser); by autocatalysis mark. His118 (proton acceptor; for processing activity) is an active-site residue. Cys141 functions as the Proton donor; for catalytic activity in the catalytic mechanism.

This sequence belongs to the prokaryotic AdoMetDC family. Type 2 subfamily. As to quaternary structure, heterooctamer of four alpha and four beta chains arranged as a tetramer of alpha/beta heterodimers. The cofactor is pyruvate. In terms of processing, is synthesized initially as an inactive proenzyme. Formation of the active enzyme involves a self-maturation process in which the active site pyruvoyl group is generated from an internal serine residue via an autocatalytic post-translational modification. Two non-identical subunits are generated from the proenzyme in this reaction, and the pyruvate is formed at the N-terminus of the alpha chain, which is derived from the carboxyl end of the proenzyme. The post-translation cleavage follows an unusual pathway, termed non-hydrolytic serinolysis, in which the side chain hydroxyl group of the serine supplies its oxygen atom to form the C-terminus of the beta chain, while the remainder of the serine residue undergoes an oxidative deamination to produce ammonia and the pyruvoyl group blocking the N-terminus of the alpha chain.

The enzyme catalyses S-adenosyl-L-methionine + H(+) = S-adenosyl 3-(methylsulfanyl)propylamine + CO2. The protein operates within amine and polyamine biosynthesis; S-adenosylmethioninamine biosynthesis; S-adenosylmethioninamine from S-adenosyl-L-methionine: step 1/1. Functionally, catalyzes the decarboxylation of S-adenosylmethionine to S-adenosylmethioninamine (dcAdoMet), the propylamine donor required for the synthesis of the polyamines spermine and spermidine from the diamine putrescine. The protein is S-adenosylmethionine decarboxylase proenzyme of Azotobacter vinelandii (strain DJ / ATCC BAA-1303).